Here is a 315-residue protein sequence, read N- to C-terminus: High mobility group protein hmg-12 (315 aa).

A disordered region spans residues 57 to 315 (VKNETDSEAV…AIDAFFDGSD (259 aa)). Residues 77–86 (ANDSPANTND) are compositionally biased toward polar residues. The a.T hook 1 DNA-binding region spans 118 to 128 (PVKKGRGRPIK). 2 stretches are compositionally biased toward low complexity: residues 147 to 160 (AQTP…IDTA) and 196 to 205 (AADTDAIDTA).

The protein belongs to the HMGA family.

The protein localises to the nucleus. Transcriptional regulator. Binds to specific sequence motifs in regulatory elements. May recruit transcription factors, or may induce structural changes in chromatin, to thereby modulate embryonic expression of ATP-dependent chaperone cdc-48.1. The protein is High mobility group protein hmg-12 of Caenorhabditis elegans.